Consider the following 407-residue polypeptide: Dephospho-CoA kinase (407 aa).

The 202-residue stretch at 3–204 (RIGLTGGIGA…QPFAHNLAQR (202 aa)) folds into the DPCK domain. 11–16 (GAGKSL) provides a ligand contact to ATP. Positions 196 to 407 (PFAHNLAQRQ…EWADAVHWRP (212 aa)) are UPF0157.

This sequence in the N-terminal section; belongs to the CoaE family. In the C-terminal section; belongs to the UPF0157 (GrpB) family.

The protein resides in the cytoplasm. The catalysed reaction is 3'-dephospho-CoA + ATP = ADP + CoA + H(+). Its pathway is cofactor biosynthesis; coenzyme A biosynthesis; CoA from (R)-pantothenate: step 5/5. Catalyzes the phosphorylation of the 3'-hydroxyl group of dephosphocoenzyme A to form coenzyme A. The sequence is that of Dephospho-CoA kinase from Mycobacterium bovis (strain ATCC BAA-935 / AF2122/97).